A 137-amino-acid polypeptide reads, in one-letter code: Large ribosomal subunit protein uL16 (137 aa).

The protein belongs to the universal ribosomal protein uL16 family. Part of the 50S ribosomal subunit.

Binds 23S rRNA and is also seen to make contacts with the A and possibly P site tRNAs. The chain is Large ribosomal subunit protein uL16 from Baumannia cicadellinicola subsp. Homalodisca coagulata.